The following is a 51-amino-acid chain: uncharacterized protein (51 aa).

A helical membrane pass occupies residues 20–42 (NFFSRMWNAVVFGFGAAIGASVA).

Its subcellular location is the membrane. This is an uncharacterized protein from Schizosaccharomyces pombe (strain 972 / ATCC 24843) (Fission yeast).